A 109-amino-acid polypeptide reads, in one-letter code: Ribonuclease P protein component (109 aa).

It belongs to the RnpA family. As to quaternary structure, consists of a catalytic RNA component (M1 or rnpB) and a protein subunit.

The enzyme catalyses Endonucleolytic cleavage of RNA, removing 5'-extranucleotides from tRNA precursor.. In terms of biological role, RNaseP catalyzes the removal of the 5'-leader sequence from pre-tRNA to produce the mature 5'-terminus. It can also cleave other RNA substrates such as 4.5S RNA. The protein component plays an auxiliary but essential role in vivo by binding to the 5'-leader sequence and broadening the substrate specificity of the ribozyme. This chain is Ribonuclease P protein component, found in Mycoplasma mycoides subsp. mycoides SC (strain CCUG 32753 / NCTC 10114 / PG1).